Consider the following 542-residue polypeptide: Probable quinate permease (542 aa).

Residues 1-22 lie on the Cytoplasmic side of the membrane; sequence MSILALVEDRPTPKEVYNWKIY. The chain crosses the membrane as a helical span at residues 23–43; sequence LLAAVASFTSCMIGYDSAFIG. At 44 to 74 the chain is on the extracellular side; it reads TTLALSSFREEFGFSTMSKTAVNLVSANIVS. A helical membrane pass occupies residues 75 to 95; the sequence is CYQAGAFFGAFFAYPIGHFWG. Residues 96–97 lie on the Cytoplasmic side of the membrane; sequence RK. Residues 98-118 form a helical membrane-spanning segment; the sequence is WGLLFAGTIFTLGAGLMLGAN. Over 119–130 the chain is Extracellular; the sequence is GDRGLGLLYGGR. A helical transmembrane segment spans residues 131 to 151; sequence VLAGLGVGAGSNITPIYISEM. At 152 to 159 the chain is on the cytoplasmic side; the sequence is APPSIRGR. The chain crosses the membrane as a helical span at residues 160–180; it reads LVGVYELGWQIGGLVGFWINY. Residues 181 to 193 are Extracellular-facing; it reads GVSETLAPSHKQW. Residues 194-214 traverse the membrane as a helical segment; it reads IIPFAVQLIPSGLLLIGAVFL. Topologically, residues 215–285 are cytoplasmic; that stretch reads KESPRWLFSR…AGTNKKVMYR (71 aa). A helical transmembrane segment spans residues 286–306; the sequence is LFLGSMLFFWQNGSGINAINY. The Extracellular portion of the chain corresponds to 307 to 325; it reads YSPTVFKSIGLHGANTSMF. A helical transmembrane segment spans residues 326–346; it reads STGIFGVVKTVVTFVWLLYLI. The Cytoplasmic segment spans residues 347–352; it reads DRLGRR. The chain crosses the membrane as a helical span at residues 353–373; sequence LLLLIGAAGAAVCLLIVGAYI. Residues 374-387 lie on the Extracellular side of the membrane; it reads KIADPASNPTQEMT. A helical membrane pass occupies residues 388-408; it reads GGGIAAMFFFYLYTVFYTPSW. Residues 409–456 lie on the Cytoplasmic side of the membrane; sequence NGTPWVMNSEMFEPNMRSLAQACAAASNWLWNFLISRFTPQMFAKMEY. A helical membrane pass occupies residues 457–477; the sequence is GVWFFFASLMLLSIVFVFFLV. Residues 478–542 lie on the Extracellular side of the membrane; that stretch reads PETKGIPLES…EHVSEDLPKV (65 aa). A disordered region spans residues 523 to 542; sequence GYSKTGEQQVEHVSEDLPKV. Positions 531 to 542 are enriched in basic and acidic residues; the sequence is QVEHVSEDLPKV.

It belongs to the major facilitator superfamily. Sugar transporter (TC 2.A.1.1) family. In terms of assembly, interacts with creB. Ubiquitinated. Deubiquitinated by creB, probably to control its activity or amount.

It is found in the cell membrane. Its function is as follows. Integral membrane transporter that imports quinic acid to be catabolized as a carbon source. This Aspergillus fumigatus (strain CBS 144.89 / FGSC A1163 / CEA10) (Neosartorya fumigata) protein is Probable quinate permease (qutD).